Consider the following 422-residue polypeptide: Tryptophan synthase beta chain 2 (422 aa).

Position 111 is an N6-(pyridoxal phosphate)lysine (lysine 111).

It belongs to the TrpB family. Tetramer of two alpha and two beta chains. Requires pyridoxal 5'-phosphate as cofactor.

It catalyses the reaction (1S,2R)-1-C-(indol-3-yl)glycerol 3-phosphate + L-serine = D-glyceraldehyde 3-phosphate + L-tryptophan + H2O. It functions in the pathway amino-acid biosynthesis; L-tryptophan biosynthesis; L-tryptophan from chorismate: step 5/5. In terms of biological role, the beta subunit is responsible for the synthesis of L-tryptophan from indole and L-serine. The polypeptide is Tryptophan synthase beta chain 2 (trpB2) (Thermotoga maritima (strain ATCC 43589 / DSM 3109 / JCM 10099 / NBRC 100826 / MSB8)).